Here is a 280-residue protein sequence, read N- to C-terminus: Hydrolase MT0498 (280 aa).

Residues 1-251 (MRIALAQIRS…PQLLVADIDV (251 aa)) enclose the CN hydrolase domain. Glu40 acts as the Proton acceptor in catalysis. The active-site Proton donor is the Lys110. Cys146 (nucleophile) is an active-site residue.

Belongs to the carbon-nitrogen hydrolase superfamily. NIT1/NIT2 family.

This chain is Hydrolase MT0498, found in Mycobacterium tuberculosis (strain CDC 1551 / Oshkosh).